A 361-amino-acid polypeptide reads, in one-letter code: tRNA 2-selenouridine synthase (361 aa).

The 124-residue stretch at 11–134 folds into the Rhodanese domain; sequence LIADTPLIDV…LRQTAIQATW (124 aa). The active-site S-selanylcysteine intermediate is Cys-94.

Belongs to the SelU family. Monomer.

The catalysed reaction is 5-methylaminomethyl-2-thiouridine(34) in tRNA + selenophosphate + (2E)-geranyl diphosphate + H2O + H(+) = 5-methylaminomethyl-2-selenouridine(34) in tRNA + (2E)-thiogeraniol + phosphate + diphosphate. The enzyme catalyses 5-methylaminomethyl-2-thiouridine(34) in tRNA + (2E)-geranyl diphosphate = 5-methylaminomethyl-S-(2E)-geranyl-thiouridine(34) in tRNA + diphosphate. It catalyses the reaction 5-methylaminomethyl-S-(2E)-geranyl-thiouridine(34) in tRNA + selenophosphate + H(+) = 5-methylaminomethyl-2-(Se-phospho)selenouridine(34) in tRNA + (2E)-thiogeraniol. It carries out the reaction 5-methylaminomethyl-2-(Se-phospho)selenouridine(34) in tRNA + H2O = 5-methylaminomethyl-2-selenouridine(34) in tRNA + phosphate. Functionally, involved in the post-transcriptional modification of the uridine at the wobble position (U34) of tRNA(Lys), tRNA(Glu) and tRNA(Gln). Catalyzes the conversion of 2-thiouridine (S2U-RNA) to 2-selenouridine (Se2U-RNA). Acts in a two-step process involving geranylation of 2-thiouridine (S2U) to S-geranyl-2-thiouridine (geS2U) and subsequent selenation of the latter derivative to 2-selenouridine (Se2U) in the tRNA chain. This Salmonella arizonae (strain ATCC BAA-731 / CDC346-86 / RSK2980) protein is tRNA 2-selenouridine synthase.